A 253-amino-acid chain; its full sequence is tRNA (guanine-N(1)-)-methyltransferase (253 aa).

Residues Gly113 and 133–138 each bind S-adenosyl-L-methionine; that span reads IGDYVL.

It belongs to the RNA methyltransferase TrmD family. Homodimer.

The protein resides in the cytoplasm. The catalysed reaction is guanosine(37) in tRNA + S-adenosyl-L-methionine = N(1)-methylguanosine(37) in tRNA + S-adenosyl-L-homocysteine + H(+). Its function is as follows. Specifically methylates guanosine-37 in various tRNAs. In Chloroflexus aurantiacus (strain ATCC 29366 / DSM 635 / J-10-fl), this protein is tRNA (guanine-N(1)-)-methyltransferase.